Consider the following 314-residue polypeptide: WD repeat domain-containing protein 83 (314 aa).

WD repeat units follow at residues cysteine 23–threonine 62, glycine 65–lysine 104, glycine 107–isoleucine 146, glutamate 151–aspartate 188, tyrosine 189–glutamate 228, glycine 231–lysine 272, and valine 275–glycine 313.

Belongs to the WD repeat MORG1 family.

The protein localises to the cytoplasm. Its function is as follows. Molecular scaffold protein for various multimeric protein complexes. Acts as a module in the assembly of a multicomponent scaffold for the ERK pathway, linking ERK responses to specific agonists. Also involved in response to hypoxia by acting as a negative regulator of HIF1A/HIF-1-alpha. The sequence is that of WD repeat domain-containing protein 83 (wdr83) from Xenopus laevis (African clawed frog).